The chain runs to 564 residues: Dihydroxy-acid dehydratase (564 aa).

Cysteine 53 contributes to the [2Fe-2S] cluster binding site. Aspartate 85 provides a ligand contact to Mg(2+). Cysteine 126 serves as a coordination point for [2Fe-2S] cluster. Mg(2+) contacts are provided by aspartate 127 and lysine 128. The residue at position 128 (lysine 128) is an N6-carboxylysine. [2Fe-2S] cluster is bound at residue cysteine 203. Residue glutamate 454 participates in Mg(2+) binding. Serine 480 functions as the Proton acceptor in the catalytic mechanism.

The protein belongs to the IlvD/Edd family. In terms of assembly, homodimer. It depends on [2Fe-2S] cluster as a cofactor. The cofactor is Mg(2+).

It carries out the reaction (2R)-2,3-dihydroxy-3-methylbutanoate = 3-methyl-2-oxobutanoate + H2O. It catalyses the reaction (2R,3R)-2,3-dihydroxy-3-methylpentanoate = (S)-3-methyl-2-oxopentanoate + H2O. It participates in amino-acid biosynthesis; L-isoleucine biosynthesis; L-isoleucine from 2-oxobutanoate: step 3/4. It functions in the pathway amino-acid biosynthesis; L-valine biosynthesis; L-valine from pyruvate: step 3/4. Functions in the biosynthesis of branched-chain amino acids. Catalyzes the dehydration of (2R,3R)-2,3-dihydroxy-3-methylpentanoate (2,3-dihydroxy-3-methylvalerate) into 2-oxo-3-methylpentanoate (2-oxo-3-methylvalerate) and of (2R)-2,3-dihydroxy-3-methylbutanoate (2,3-dihydroxyisovalerate) into 2-oxo-3-methylbutanoate (2-oxoisovalerate), the penultimate precursor to L-isoleucine and L-valine, respectively. In Mycobacterium leprae (strain TN), this protein is Dihydroxy-acid dehydratase.